We begin with the raw amino-acid sequence, 336 residues long: Zinc finger protein GFI1 homolog pag-3 (336 aa).

5 consecutive C2H2-type zinc fingers follow at residues F126–H148, F154–H176, Y182–H204, H210–H232, and F238–H260. The disordered stretch occupies residues R253 to N290.

As to quaternary structure, may interact with transcription factor unc-3. Expressed in the BDU neurons, the touch neurons, the VA, VB and VC motor neurons, two AVF interneurons and unidentified neurons of the retrovesicular ganglion (at protein level).

It is found in the nucleus. Its subcellular location is the cell projection. It localises to the axon. The protein localises to the perikaryon. Transcription factor. Plays a role in the determination of neuroblast cell fate and neuronal differentiation. Negatively modulates expression of several components of dense-core vesicles (DCVs), thereby, in a DCV membrane protein ida-1-dependent manner, regulating neurosecretion. Negatively modulates the transcription of its own gene, the mechanosensory gene mec-3, and also other touch neuron-specific genes in the BDU neurons; required for coordinated movement. Required to determine the identity of BDU sensory neurons in concert with transcription factor unc-86, regulating expression of a number of genes, including transcription factors ceh-14 and ahr-1, neuropeptides flp-10, nlp-1 and nlp-15, and tyramine receptor-encoding ser-2. Acts in concert with non-canonical WNT signaling to negatively modulate transcription of mec-3 gene in BDU neurons. May act in concert with transcription factor unc-3 in motor neuron fate determination. May play a role programmed cell death. The polypeptide is Zinc finger protein GFI1 homolog pag-3 (Caenorhabditis elegans).